A 637-amino-acid polypeptide reads, in one-letter code: 3D-(3,5/4)-trihydroxycyclohexane-1,2-dione hydrolase (637 aa).

Glutamate 65 provides a ligand contact to thiamine diphosphate. A thiamine pyrophosphate binding region spans residues 441 to 521 (SLPGDLQRLW…INVLLFDNSG (81 aa)). Residues aspartate 492 and asparagine 519 each contribute to the Mg(2+) site.

Belongs to the TPP enzyme family. The cofactor is Mg(2+). Requires thiamine diphosphate as cofactor.

The catalysed reaction is 3D-3,5/4-trihydroxycyclohexane-1,2-dione + H2O = 5-deoxy-D-glucuronate + H(+). Its pathway is polyol metabolism; myo-inositol degradation into acetyl-CoA; acetyl-CoA from myo-inositol: step 3/7. Its function is as follows. Involved in the cleavage of the C1-C2 bond of 3D-(3,5/4)-trihydroxycyclohexane-1,2-dione (THcHDO) to yield 5-deoxy-glucuronate (5DG). This Halalkalibacterium halodurans (strain ATCC BAA-125 / DSM 18197 / FERM 7344 / JCM 9153 / C-125) (Bacillus halodurans) protein is 3D-(3,5/4)-trihydroxycyclohexane-1,2-dione hydrolase.